Here is a 633-residue protein sequence, read N- to C-terminus: Terminal nucleotidyltransferase 4B (633 aa).

The tract at residues 1–115 (MFRSGERPLG…GGGRADGGGG (115 aa)) is disordered. Residues 25 to 34 (ETTNNNNNHH) show a composition bias toward polar residues. 2 stretches are compositionally biased toward low complexity: residues 36–52 (PAAWARRASAGPSASPV) and 60–70 (RPAAALPASES). A compositionally biased stretch (polar residues) spans 87 to 98 (ASTYGLNYSLLQ). Residues 103–115 (RAAGGGRADGGGG) show a composition bias toward gly residues. Mg(2+) is bound by residues Asp191 and Asp193. ATP is bound by residues Gly254, Lys279, Ser297, Tyr298, Asn382, and Arg386. The PAP-associated domain occupies 322-382 (NYGVLLIEFF…YIEDPLQPGN (61 aa)). Residues 484–633 (LGKCRSNASE…RDAPLSELCR (150 aa)) form a disordered region. The segment covering 492–519 (SEPLSKHSSNSSSGPVSSSSATQSSSSD) has biased composition (low complexity). Lys531 participates in a covalent cross-link: Glycyl lysine isopeptide (Lys-Gly) (interchain with G-Cter in SUMO2). The span at 542–552 (RVGSQDVSLEV) shows a compositional bias: polar residues. The residue at position 545 (Ser545) is a Phosphoserine. Residues Lys558, Lys573, and Lys587 each participate in a glycyl lysine isopeptide (Lys-Gly) (interchain with G-Cter in SUMO2) cross-link. Residues 559 to 614 (MQSTQTTNTPNNANKSQHGSARLFRSSSKGFQGTAQTSHGALMTSKQHQGKSNTQY) are compositionally biased toward polar residues. The Basic, involved in binding of the RNA primer motif lies at 618–624 (KKRRHKR).

Belongs to the DNA polymerase type-B-like family. In terms of assembly, component of a nucleolar TRAMP-like complex, an ATP-dependent exosome regulatory complex consisting of a helicase (MTREX), an oligadenylate polymerase (TENT4B or TENT4A), and a substrate specific RNA-binding factor (ZCCHC7 or ZCCHC8). Several TRAMP-like complexes exist with specific compositions and are associated with nuclear, or nucleolar RNA exosomes. Requires Mg(2+) as cofactor. The cofactor is Mn(2+).

Its subcellular location is the nucleus. The protein localises to the nucleolus. It is found in the cytoplasm. The catalysed reaction is RNA(n) + ATP = RNA(n)-3'-adenine ribonucleotide + diphosphate. Functionally, terminal nucleotidyltransferase that catalyzes preferentially the transfer of ATP and GTP on RNA 3' poly(A) tail creating a heterogeneous 3' poly(A) tail leading to mRNAs stabilization by protecting mRNAs from active deadenylation. Also functions as a catalytic subunit of a TRAMP-like complex which has a poly(A) RNA polymerase activity and is involved in a post-transcriptional quality control mechanism. Polyadenylation with short oligo(A) tails is required for the degradative activity of the exosome on several of its nuclear RNA substrates. Doesn't need a cofactor for polyadenylation activity (in vitro). Plays a role in replication-dependent histone mRNA degradation, probably through terminal uridylation of mature histone mRNAs. May play a role in sister chromatid cohesion. The polypeptide is Terminal nucleotidyltransferase 4B (Mus musculus (Mouse)).